The following is a 209-amino-acid chain: Uracil phosphoribosyltransferase (209 aa).

Residues arginine 79, arginine 104, and 131–139 (DPMLATGNS) contribute to the 5-phospho-alpha-D-ribose 1-diphosphate site. Residues isoleucine 194 and 199–201 (GDA) contribute to the uracil site. Aspartate 200 lines the 5-phospho-alpha-D-ribose 1-diphosphate pocket.

It belongs to the UPRTase family. The cofactor is Mg(2+).

The catalysed reaction is UMP + diphosphate = 5-phospho-alpha-D-ribose 1-diphosphate + uracil. The protein operates within pyrimidine metabolism; UMP biosynthesis via salvage pathway; UMP from uracil: step 1/1. With respect to regulation, allosterically activated by GTP. Catalyzes the conversion of uracil and 5-phospho-alpha-D-ribose 1-diphosphate (PRPP) to UMP and diphosphate. The polypeptide is Uracil phosphoribosyltransferase (Agrobacterium fabrum (strain C58 / ATCC 33970) (Agrobacterium tumefaciens (strain C58))).